Consider the following 172-residue polypeptide: MTTNLADLIRNIPDFPIPGIQFKDITPLLQNGAAFKEVIDTLAARYEGRALDAIVGIESRGFIFSAPLAYRLGVGMIPIRKPGKLPWETFAVEYDLEYGTNKLEMHRDALAPGARVVVIDDVLATGGTVAAACQMVEMAGAVVEEVAFLIELTFLKGRERLAKYPFFSMIQY.

It belongs to the purine/pyrimidine phosphoribosyltransferase family. Homodimer.

It localises to the cytoplasm. It carries out the reaction AMP + diphosphate = 5-phospho-alpha-D-ribose 1-diphosphate + adenine. It participates in purine metabolism; AMP biosynthesis via salvage pathway; AMP from adenine: step 1/1. Its function is as follows. Catalyzes a salvage reaction resulting in the formation of AMP, that is energically less costly than de novo synthesis. This chain is Adenine phosphoribosyltransferase, found in Roseiflexus sp. (strain RS-1).